The chain runs to 485 residues: Cys-Gly metallodipeptidase DUG1 (485 aa).

Zn(2+) is bound at residue H109. D111 is a catalytic residue. D144 is a Zn(2+) binding site. The active-site Proton acceptor is the E178. E179, D207, and H457 together coordinate Zn(2+).

The protein belongs to the peptidase M20A family. In terms of assembly, homodimer. Component of the GSH degradosomal complex. Zn(2+) is required as a cofactor. The cofactor is Mn(2+).

The protein localises to the cytoplasm. Functionally, catalytic component of the GSH degradosomal complex involved in the degradation of glutathione (GSH) and other peptides containing a gamma-glu-X bond. Also functions as a dipeptidase with high specificity for Cys-Gly and no activity toward tri- or tetrapeptides. The chain is Cys-Gly metallodipeptidase DUG1 (DUG1) from Candida albicans (strain SC5314 / ATCC MYA-2876) (Yeast).